Consider the following 128-residue polypeptide: Probable 4-amino-4-deoxy-L-arabinose-phosphoundecaprenol flippase subunit ArnF (128 aa).

The Cytoplasmic segment spans residues 1–2 (MG). The chain crosses the membrane as a helical span at residues 3 to 23 (LMWGLFSVIIASVAQLSLGFA). The Periplasmic portion of the chain corresponds to 24–35 (ASHLPPMTHLWD). Residues 36 to 56 (FIATLLAFGLDARILLLGLLG) form a helical membrane-spanning segment. Residues 57–77 (YLLSVFCWYKTLHKLALSKAY) lie on the Cytoplasmic side of the membrane. Residues 78–98 (ALLSMSYVLVWIASMVLPGWG) form a helical membrane-spanning segment. The Periplasmic segment spans residues 99 to 100 (GT). The helical transmembrane segment at 101–121 (FSLKALLGVACIMSGLMLIFL) threads the bilayer. Residues 122–128 (PTTKQRY) lie on the Cytoplasmic side of the membrane.

It belongs to the ArnF family. As to quaternary structure, heterodimer of ArnE and ArnF.

It localises to the cell inner membrane. The protein operates within bacterial outer membrane biogenesis; lipopolysaccharide biosynthesis. Its function is as follows. Translocates 4-amino-4-deoxy-L-arabinose-phosphoundecaprenol (alpha-L-Ara4N-phosphoundecaprenol) from the cytoplasmic to the periplasmic side of the inner membrane. In Shigella dysenteriae serotype 1 (strain Sd197), this protein is Probable 4-amino-4-deoxy-L-arabinose-phosphoundecaprenol flippase subunit ArnF.